The primary structure comprises 192 residues: Imidazoleglycerol-phosphate dehydratase (192 aa).

It belongs to the imidazoleglycerol-phosphate dehydratase family.

It is found in the cytoplasm. It carries out the reaction D-erythro-1-(imidazol-4-yl)glycerol 3-phosphate = 3-(imidazol-4-yl)-2-oxopropyl phosphate + H2O. Its pathway is amino-acid biosynthesis; L-histidine biosynthesis; L-histidine from 5-phospho-alpha-D-ribose 1-diphosphate: step 6/9. The sequence is that of Imidazoleglycerol-phosphate dehydratase from Vesicomyosocius okutanii subsp. Calyptogena okutanii (strain HA).